A 1196-amino-acid polypeptide reads, in one-letter code: DNA-directed RNA polymerase subunit beta (1196 aa).

The protein belongs to the RNA polymerase beta chain family. The RNAP catalytic core consists of 2 alpha, 1 beta, 1 beta' and 1 omega subunit. When a sigma factor is associated with the core the holoenzyme is formed, which can initiate transcription.

It catalyses the reaction RNA(n) + a ribonucleoside 5'-triphosphate = RNA(n+1) + diphosphate. Its function is as follows. DNA-dependent RNA polymerase catalyzes the transcription of DNA into RNA using the four ribonucleoside triphosphates as substrates. The sequence is that of DNA-directed RNA polymerase subunit beta from Lactococcus lactis subsp. cremoris (strain MG1363).